The following is a 165-amino-acid chain: Cytochrome c-type biogenesis protein CcmE (165 aa).

The Cytoplasmic segment spans residues methionine 1–arginine 7. A helical; Signal-anchor for type II membrane protein transmembrane segment spans residues leucine 8–alanine 28. At methionine 29–arginine 165 the chain is on the periplasmic side. 2 residues coordinate heme: histidine 122 and tyrosine 126. Over residues glutamine 138–proline 149 the composition is skewed to basic and acidic residues. The interval glutamine 138–arginine 165 is disordered. A compositionally biased stretch (low complexity) spans glycine 153 to arginine 165.

The protein belongs to the CcmE/CycJ family.

The protein localises to the cell inner membrane. Heme chaperone required for the biogenesis of c-type cytochromes. Transiently binds heme delivered by CcmC and transfers the heme to apo-cytochromes in a process facilitated by CcmF and CcmH. In Rhodopseudomonas palustris (strain HaA2), this protein is Cytochrome c-type biogenesis protein CcmE.